Reading from the N-terminus, the 651-residue chain is DNA topoisomerase 3 (651 aa).

The Toprim domain maps to 1-134 (MRLFIAEKPS…KRDKILRCLI (134 aa)). E7, D103, and D105 together coordinate Mg(2+). The Topo IA-type catalytic domain occupies 155–612 (FIPLATSALA…NLNQILPDLV (458 aa)). The interaction with DNA stretch occupies residues 194-199 (SVGRVQ). The active-site O-(5'-phospho-DNA)-tyrosine intermediate is Y337. Residues 631 to 651 (SDRAKPKSAVKKSSKSNGETD) form a disordered region.

Belongs to the type IA topoisomerase family. Requires Mg(2+) as cofactor.

The enzyme catalyses ATP-independent breakage of single-stranded DNA, followed by passage and rejoining.. Releases the supercoiling and torsional tension of DNA, which is introduced during the DNA replication and transcription, by transiently cleaving and rejoining one strand of the DNA duplex. Introduces a single-strand break via transesterification at a target site in duplex DNA. The scissile phosphodiester is attacked by the catalytic tyrosine of the enzyme, resulting in the formation of a DNA-(5'-phosphotyrosyl)-enzyme intermediate and the expulsion of a 3'-OH DNA strand. The free DNA strand then undergoes passage around the unbroken strand, thus removing DNA supercoils. Finally, in the religation step, the DNA 3'-OH attacks the covalent intermediate to expel the active-site tyrosine and restore the DNA phosphodiester backbone. This Haemophilus influenzae (strain ATCC 51907 / DSM 11121 / KW20 / Rd) protein is DNA topoisomerase 3.